Consider the following 219-residue polypeptide: NADH-quinone oxidoreductase subunit C (219 aa).

It belongs to the complex I 30 kDa subunit family. As to quaternary structure, NDH-1 is composed of 14 different subunits. Subunits NuoB, C, D, E, F, and G constitute the peripheral sector of the complex.

It is found in the cell inner membrane. The catalysed reaction is a quinone + NADH + 5 H(+)(in) = a quinol + NAD(+) + 4 H(+)(out). NDH-1 shuttles electrons from NADH, via FMN and iron-sulfur (Fe-S) centers, to quinones in the respiratory chain. The immediate electron acceptor for the enzyme in this species is believed to be ubiquinone. Couples the redox reaction to proton translocation (for every two electrons transferred, four hydrogen ions are translocated across the cytoplasmic membrane), and thus conserves the redox energy in a proton gradient. This chain is NADH-quinone oxidoreductase subunit C, found in Methylorubrum extorquens (strain PA1) (Methylobacterium extorquens).